The chain runs to 283 residues: Probable cytochrome c oxidase subunit 3 (283 aa).

6 consecutive transmembrane segments (helical) span residues 26 to 46, 51 to 71, 94 to 114, 179 to 199, 217 to 237, and 261 to 281; these read PWPV…VSFM, FNIY…YSWW, IGMA…FASF, CVTA…MQAY, FYLA…FLII, and AWYW…VYIF.

It belongs to the cytochrome c oxidase subunit 3 family.

The protein localises to the cell membrane. The catalysed reaction is 4 Fe(II)-[cytochrome c] + O2 + 8 H(+)(in) = 4 Fe(III)-[cytochrome c] + 2 H2O + 4 H(+)(out). This chain is Probable cytochrome c oxidase subunit 3 (ctaE), found in Rickettsia conorii (strain ATCC VR-613 / Malish 7).